Here is a 289-residue protein sequence, read N- to C-terminus: Metal-staphylopine import system permease protein CntC (289 aa).

5 helical membrane passes run Ala-13–Val-33, Leu-77–Leu-97, Val-115–Gly-135, Ile-194–Phe-214, and Ile-249–Ile-269. The 190-residue stretch at Ile-73 to Ser-262 folds into the ABC transmembrane type-1 domain.

It belongs to the binding-protein-dependent transport system permease family. In terms of assembly, the complex is composed of two ATP-binding proteins (CntD and CntF), two transmembrane proteins (CntB and CntC) and a solute-binding protein (CntA).

The protein localises to the cell membrane. Part of the ABC transporter complex CntABCDF (Opp1) involved in the uptake of metal in complex with the metallophore staphylopine (StP). May be involved in the import of a large array of divalent metals ions such as nickel, cobalt, zinc, copper and iron. Probably responsible for the translocation of the substrate across the membrane. The chain is Metal-staphylopine import system permease protein CntC from Staphylococcus aureus (strain Mu50 / ATCC 700699).